The chain runs to 278 residues: Adenosylcobinamide-GDP ribazoletransferase (278 aa).

Transmembrane regions (helical) follow at residues 35 to 55, 62 to 82, 116 to 136, 141 to 161, 185 to 205, 222 to 242, and 257 to 277; these read VVGIIVGFILLFFCIIFNFIL, AVLPLMIIVVILTDLITTGAL, GALALILYFLLKFILLFSLTI, AAVYAIITYPVVSRFCSVVSC, LIVATVITLLYTIGMLFMPFI, LIIVIIVGLLALFAFAFSKLI, and LLEISSLVYIFLFLVIPTFFI.

It belongs to the CobS family. Mg(2+) serves as cofactor.

Its subcellular location is the cell inner membrane. The catalysed reaction is alpha-ribazole + adenosylcob(III)inamide-GDP = adenosylcob(III)alamin + GMP + H(+). It catalyses the reaction alpha-ribazole 5'-phosphate + adenosylcob(III)inamide-GDP = adenosylcob(III)alamin 5'-phosphate + GMP + H(+). Its pathway is cofactor biosynthesis; adenosylcobalamin biosynthesis; adenosylcobalamin from cob(II)yrinate a,c-diamide: step 7/7. Functionally, joins adenosylcobinamide-GDP and alpha-ribazole to generate adenosylcobalamin (Ado-cobalamin). Also synthesizes adenosylcobalamin 5'-phosphate from adenosylcobinamide-GDP and alpha-ribazole 5'-phosphate. This Fusobacterium nucleatum subsp. nucleatum (strain ATCC 25586 / DSM 15643 / BCRC 10681 / CIP 101130 / JCM 8532 / KCTC 2640 / LMG 13131 / VPI 4355) protein is Adenosylcobinamide-GDP ribazoletransferase.